Reading from the N-terminus, the 69-residue chain is uncharacterized protein (69 aa).

The region spanning 5-60 (IREHRKELGLTQEELAERVGVTRQTIIALEKGRYSPSLILAHRIARALGREHIEDI) is the HTH cro/C1-type domain. Positions 16–35 (QEELAERVGVTRQTIIALEK) form a DNA-binding region, H-T-H motif.

This is an uncharacterized protein from Methanothermobacter thermautotrophicus (strain ATCC 29096 / DSM 1053 / JCM 10044 / NBRC 100330 / Delta H) (Methanobacterium thermoautotrophicum).